We begin with the raw amino-acid sequence, 362 residues long: Holliday junction branch migration complex subunit RuvB (362 aa).

The tract at residues Met-1 to Asn-20 is disordered. The large ATPase domain (RuvB-L) stretch occupies residues Pro-15–Tyr-203. ATP-binding positions include Leu-42, Arg-43, Gly-84, Lys-87, Thr-88, Thr-89, Glu-150 to Phe-152, Arg-193, Tyr-203, and Arg-240. Residue Thr-88 coordinates Mg(2+). The interval Pro-204 to Gln-274 is small ATPAse domain (RuvB-S). Residues Thr-277 to Ser-362 are head domain (RuvB-H). DNA contacts are provided by Arg-332 and Arg-337.

This sequence belongs to the RuvB family. Homohexamer. Forms an RuvA(8)-RuvB(12)-Holliday junction (HJ) complex. HJ DNA is sandwiched between 2 RuvA tetramers; dsDNA enters through RuvA and exits via RuvB. An RuvB hexamer assembles on each DNA strand where it exits the tetramer. Each RuvB hexamer is contacted by two RuvA subunits (via domain III) on 2 adjacent RuvB subunits; this complex drives branch migration. In the full resolvosome a probable DNA-RuvA(4)-RuvB(12)-RuvC(2) complex forms which resolves the HJ.

Its subcellular location is the cytoplasm. It catalyses the reaction ATP + H2O = ADP + phosphate + H(+). In terms of biological role, the RuvA-RuvB-RuvC complex processes Holliday junction (HJ) DNA during genetic recombination and DNA repair, while the RuvA-RuvB complex plays an important role in the rescue of blocked DNA replication forks via replication fork reversal (RFR). RuvA specifically binds to HJ cruciform DNA, conferring on it an open structure. The RuvB hexamer acts as an ATP-dependent pump, pulling dsDNA into and through the RuvAB complex. RuvB forms 2 homohexamers on either side of HJ DNA bound by 1 or 2 RuvA tetramers; 4 subunits per hexamer contact DNA at a time. Coordinated motions by a converter formed by DNA-disengaged RuvB subunits stimulates ATP hydrolysis and nucleotide exchange. Immobilization of the converter enables RuvB to convert the ATP-contained energy into a lever motion, pulling 2 nucleotides of DNA out of the RuvA tetramer per ATP hydrolyzed, thus driving DNA branch migration. The RuvB motors rotate together with the DNA substrate, which together with the progressing nucleotide cycle form the mechanistic basis for DNA recombination by continuous HJ branch migration. Branch migration allows RuvC to scan DNA until it finds its consensus sequence, where it cleaves and resolves cruciform DNA. This chain is Holliday junction branch migration complex subunit RuvB, found in Bifidobacterium adolescentis (strain ATCC 15703 / DSM 20083 / NCTC 11814 / E194a).